The chain runs to 1015 residues: GTPase-activating Rap/Ran-GAP domain-like protein 3 (1015 aa).

The Rap-GAP domain occupies 200–416; the sequence is LLVLEEQEGS…RTLDMLIRSL (217 aa). Residues 498 to 812 enclose the CNH domain; the sequence is PYDIVCGDSW…QLTASRSDIY (315 aa). 2 disordered regions span residues 821-842 and 924-1004; these read SASNCSSRDTSSQSSPQTPTGY and ELLG…FTFS. Residues 823–835 are compositionally biased toward low complexity; that stretch reads SNCSSRDTSSQSS. Basic and acidic residues predominate over residues 949-959; the sequence is KNKEEEQKRTA.

The protein belongs to the GARNL3 family.

In Danio rerio (Zebrafish), this protein is GTPase-activating Rap/Ran-GAP domain-like protein 3 (garnl3).